Reading from the N-terminus, the 479-residue chain is Sulfate adenylyltransferase subunit 1 (479 aa).

The region spanning 25 to 239 (KSLLRFLTCG…EVLETVDIQR (215 aa)) is the tr-type G domain. The interval 34-41 (GSVDDGKS) is G1. Position 34-41 (34-41 (GSVDDGKS)) interacts with GTP. A G2 region spans residues 92–96 (GITID). The segment at 113 to 116 (DTPG) is G3. GTP contacts are provided by residues 113-117 (DTPGH) and 168-171 (NKMD). The tract at residues 168–171 (NKMD) is G4. The tract at residues 206-208 (SAL) is G5.

It belongs to the TRAFAC class translation factor GTPase superfamily. Classic translation factor GTPase family. CysN/NodQ subfamily. In terms of assembly, heterodimer composed of CysD, the smaller subunit, and CysN.

The catalysed reaction is sulfate + ATP + H(+) = adenosine 5'-phosphosulfate + diphosphate. Its pathway is sulfur metabolism; hydrogen sulfide biosynthesis; sulfite from sulfate: step 1/3. Its function is as follows. With CysD forms the ATP sulfurylase (ATPS) that catalyzes the adenylation of sulfate producing adenosine 5'-phosphosulfate (APS) and diphosphate, the first enzymatic step in sulfur assimilation pathway. APS synthesis involves the formation of a high-energy phosphoric-sulfuric acid anhydride bond driven by GTP hydrolysis by CysN coupled to ATP hydrolysis by CysD. This chain is Sulfate adenylyltransferase subunit 1, found in Salmonella paratyphi A (strain ATCC 9150 / SARB42).